The sequence spans 828 residues: MTDNQENKPKKLTLSNTKLSLNKSFDSLASTQSFVNAKSKTLVEVRKSYSGSTTTLSLNKEKGSLETGSSSGSEEFNRRLSILKKAAEQSKLNDNSQISTLSKLASINQSIASQEDPIEVEQEESSDTNKVKEEPKIEEVKDIEESTLQTPKKKEDIFVKSPLVGTRTRYGIESEKTVDKVTENKVIAPKPKVEESRKFKKTDLFNMVGDDENDNRNRTRSLASIKRAREKEKRKSLVQVPEKVYREITLPEVIGVGDFANAMSERVSDVIKELMKLGILANASQTIDADTAELVATHLGHAVKRVQESDVENILITNDKEEDLRSRAPVVTVMGHVDHGKTSLLDALKSTDVASGETGGITQHIGAYRVTLADGRAITFIDTPGHEAFSEMRSRGAGVTDIVIIVVAADDGIKPQTVEAINHAKAANVPIIVAINKIDKPDIDIERIKNELYMYEIIGEEAGGDVMVIPISALKKINLDKLEEAILLIAEMQNLKASPFGSASGVVIESKIEKGRGALTTMLVQRGTLKSGDIIIAGTAYGKVKKMTNDKGIEVLEATPSVPIEIQGLSHVPHAGDMFNVVQTEKQAKDIAEYRERVAKEKKISIAPRSSLEDLFLKASGSSKIKELPLIIKGDVHGSVEAIAGSLLKLPNDEVKLRILHSGVGPITESDVSLAHASSAIIVGFNVRAGANAKTAAEKEKVEIRYYSIIYDLLDDVKAIMSGMLDPIIREQYIGSVEIRQIFNITKIGKIAGSYVTRGIIKKGAGVRLLRDNIVIHEGKLKTLKRFKEEVKEVREGYECGIAFENYEDIREGDTVEVFELIQEKKQL.

Disordered stretches follow at residues 48-76 (SYSG…SEEF) and 112-148 (ASQE…ESTL). A compositionally biased stretch (polar residues) spans 49–58 (YSGSTTTLSL). The span at 65–74 (LETGSSSGSE) shows a compositional bias: low complexity. Acidic residues predominate over residues 116–126 (DPIEVEQEESS). Residues 127–144 (DTNKVKEEPKIEEVKDIE) show a composition bias toward basic and acidic residues. The tr-type G domain maps to 326–496 (SRAPVVTVMG…LLIAEMQNLK (171 aa)). The tract at residues 335–342 (GHVDHGKT) is G1. GTP is bound at residue 335-342 (GHVDHGKT). The interval 360–364 (GITQH) is G2. The tract at residues 382–385 (DTPG) is G3. GTP-binding positions include 382-386 (DTPGH) and 436-439 (NKID). Positions 436–439 (NKID) are G4. Positions 472–474 (SAL) are G5.

Belongs to the TRAFAC class translation factor GTPase superfamily. Classic translation factor GTPase family. IF-2 subfamily.

The protein resides in the cytoplasm. Its function is as follows. One of the essential components for the initiation of protein synthesis. Protects formylmethionyl-tRNA from spontaneous hydrolysis and promotes its binding to the 30S ribosomal subunits. Also involved in the hydrolysis of GTP during the formation of the 70S ribosomal complex. The polypeptide is Translation initiation factor IF-2 (Rickettsia bellii (strain OSU 85-389)).